The primary structure comprises 110 residues: V-type proton ATPase subunit G1 (110 aa).

Residue methionine 1 is modified to N-acetylmethionine. Residues 60–80 are disordered; the sequence is KLEETSGDSGANVKRLEQETD.

The protein belongs to the V-ATPase G subunit family. In terms of assembly, V-ATPase is a heteromultimeric enzyme composed of a peripheral catalytic V1 complex (components A to H) attached to an integral membrane V0 proton pore complex (components: a, c, c'', d and e).

The protein resides in the cell membrane. The protein localises to the vacuole membrane. Its function is as follows. Catalytic subunit of the peripheral V1 complex of vacuolar ATPase (V-ATPase). V-ATPase is responsible for acidifying a variety of intracellular compartments in eukaryotic cells. This is V-type proton ATPase subunit G1 (VHA-G1) from Arabidopsis thaliana (Mouse-ear cress).